Consider the following 422-residue polypeptide: UDP-N-acetylglucosamine 1-carboxyvinyltransferase (422 aa).

Phosphoenolpyruvate is bound at residue Lys-22 to Asn-23. Residue Arg-94 participates in UDP-N-acetyl-alpha-D-glucosamine binding. Residue Cys-118 is the Proton donor of the active site. A 2-(S-cysteinyl)pyruvic acid O-phosphothioketal modification is found at Cys-118. Residues Arg-123 to Leu-127, Asp-309, and Ile-331 each bind UDP-N-acetyl-alpha-D-glucosamine.

Belongs to the EPSP synthase family. MurA subfamily.

Its subcellular location is the cytoplasm. The enzyme catalyses phosphoenolpyruvate + UDP-N-acetyl-alpha-D-glucosamine = UDP-N-acetyl-3-O-(1-carboxyvinyl)-alpha-D-glucosamine + phosphate. It functions in the pathway cell wall biogenesis; peptidoglycan biosynthesis. Functionally, cell wall formation. Adds enolpyruvyl to UDP-N-acetylglucosamine. The chain is UDP-N-acetylglucosamine 1-carboxyvinyltransferase from Cereibacter sphaeroides (strain ATCC 17023 / DSM 158 / JCM 6121 / CCUG 31486 / LMG 2827 / NBRC 12203 / NCIMB 8253 / ATH 2.4.1.) (Rhodobacter sphaeroides).